Here is a 57-residue protein sequence, read N- to C-terminus: uncharacterized protein (57 aa).

The next 2 membrane-spanning stretches (helical) occupy residues 2 to 22 and 29 to 49; these read LLVV…LRSV and GFLL…MTVI.

It is found in the cell membrane. This is an uncharacterized protein from Bacillus subtilis (strain 168).